The following is a 232-amino-acid chain: N-(5'-phosphoribosyl)anthranilate isomerase (232 aa).

It belongs to the TrpF family.

The catalysed reaction is N-(5-phospho-beta-D-ribosyl)anthranilate = 1-(2-carboxyphenylamino)-1-deoxy-D-ribulose 5-phosphate. Its pathway is amino-acid biosynthesis; L-tryptophan biosynthesis; L-tryptophan from chorismate: step 3/5. This Lipomyces starkeyi (Oleaginous yeast) protein is N-(5'-phosphoribosyl)anthranilate isomerase (TRP1).